A 1659-amino-acid polypeptide reads, in one-letter code: Fatty acid synthase subunit alpha (1659 aa).

The segment at 114-139 (TQAQASGGAGTIAGAGSSTAPVTAPP) is disordered. Positions 160 to 235 (AQAFEIVRTL…AALQKTFTGQ (76 aa)) constitute a Carrier domain. The residue at position 195 (serine 195) is an O-(pantetheine 4'-phosphoryl)serine. The tract at residues 588 to 826 (GRSVLITGAG…LCLMFNTMCS (239 aa)) is ketoreductase (KR) domain. In terms of domain architecture, Ketosynthase family 3 (KS3) spans 1030–1575 (KQLLHEVLIQ…QKGAQTIVVH (546 aa)). Active-site for beta-ketoacyl synthase activity residues include cysteine 1217, histidine 1458, and histidine 1499. The tract at residues 1631–1659 (ETLLDPTPPQTNVDDRVARSIVQQESAEP) is disordered.

The protein belongs to the thiolase-like superfamily. Fungal fatty acid synthetase subunit alpha family. As to quaternary structure, [Alpha(6)beta(6)] hexamers of two multifunctional subunits (alpha and beta). Post-translationally, 4'-phosphopantetheine is transferred from CoA to a specific serine of the acyl carrier domain by the C-terminal PPT domain. This modification is essential for activity because fatty acids are bound in thioester linkage to the sulfhydryl of the prosthetic group.

The catalysed reaction is acetyl-CoA + n malonyl-CoA + 2n NADPH + 4n H(+) = a long-chain-acyl-CoA + n CoA + n CO2 + 2n NADP(+).. The enzyme catalyses a fatty acyl-[ACP] + malonyl-[ACP] + H(+) = a 3-oxoacyl-[ACP] + holo-[ACP] + CO2. It catalyses the reaction a (3R)-hydroxyacyl-[ACP] + NADP(+) = a 3-oxoacyl-[ACP] + NADPH + H(+). The protein operates within secondary metabolite biosynthesis. In terms of biological role, fatty acid synthase subunit alpha; part of the gene cluster that mediates the biosynthesis of aspercryptins, linear lipopeptides built from six amino acids including 2 highly unusual and nonproteogenic amino acids, 2-amino-octanoic acid (2aoa) and 2-amino-dodecanol (2adol). The core structure of aspercryptins is as follows: Ser/Ala-Thr-Ile/Val-2aoa-Asn-2adol. The first step of aspercryptin biosynthesis is the generation of the fatty acid precursors, octanoic and dodecanoic acids, by the FAS subunits atnF and atnM. The fatty acid precursors are likely transformed into the corresponding alpha-amino fatty acids in three steps. First, they are hydroxylated by the cytochrome P450 monooxygenase atnE, then oxidized to the corresponding alpha-keto acids by the NAD(P)-dependent oxidoreductase atnD, and finally converted to the alpha-amino fatty acids by the PLP-dependent aminotransferases atnH or atnJ. the alpha-amino fatty acids, 2-amino-octanoic and 2-amino-dodecanoic acids, are recognized, activated, and covalently tethered to the NRPS atnA by its fourth and sixth adenylation domains. The second module of atnA is the Thr module and contains an epimerase (E) domain responsible for the epimerization of Thr to D-allo-Thr. Additionally, despite atnA having only one epimerase domain, the first amino acid of aspercryptin A1 is D-Ser, suggesting that serine is either loaded directly as D-Ser on the first module or that the epimerase domain in the threonine module epimerizes both L-Ser and L-Thr. After condensation of the hexapeptide of aspercryptin, the C-terminal reductase (TE) domain might be involved in the reductive release and production of the aldehyde hexapeptide. Further reduction would generate aspercryptins. The variety of aspercryptins produced reflects the flexibility of the atnA NRPS, allowing incorporation of alanine instead of serine, valine for isoleucine, and a C10 fatty amino alcohol instead of the C12 version. AtnB seems to be involved in the selectivity for Ile versus Val by the third module. Moreover, type B, C and D aspercryptins have an additional N-terminal cichorine, acetyl and propionyl group respectively. The sequence is that of Fatty acid synthase subunit alpha from Emericella nidulans (strain FGSC A4 / ATCC 38163 / CBS 112.46 / NRRL 194 / M139) (Aspergillus nidulans).